A 162-amino-acid chain; its full sequence is Regulator of sigma D (162 aa).

The protein belongs to the Rsd/AlgQ family. In terms of assembly, interacts with RpoD.

It is found in the cytoplasm. Functionally, binds RpoD and negatively regulates RpoD-mediated transcription activation by preventing the interaction between the primary sigma factor RpoD with the catalytic core of the RNA polymerase and with promoter DNA. May be involved in replacement of the RNA polymerase sigma subunit from RpoD to RpoS during the transition from exponential growth to the stationary phase. This Salmonella arizonae (strain ATCC BAA-731 / CDC346-86 / RSK2980) protein is Regulator of sigma D.